Consider the following 391-residue polypeptide: tRNA (cytosine(38)-C(5))-methyltransferase (391 aa).

Residues 4–391 (LRVLELYSGI…VSKLLTVLCE (388 aa)) enclose the SAM-dependent MTase C5-type domain. Residues 13 to 15 (IGG), Asp-34, 57 to 58 (IE), and Ser-76 contribute to the S-adenosyl-L-methionine site. Residue Cys-79 is part of the active site. Ser-376 is a binding site for S-adenosyl-L-methionine.

This sequence belongs to the class I-like SAM-binding methyltransferase superfamily. C5-methyltransferase family.

Its subcellular location is the cytoplasm. It carries out the reaction cytidine(38) in tRNA + S-adenosyl-L-methionine = 5-methylcytidine(38) in tRNA + S-adenosyl-L-homocysteine + H(+). Its function is as follows. Specifically methylates cytosine 38 in the anticodon loop of tRNA(Asp). Has higher activity on tRNA(Asp) modified with queuosine at position 34. The polypeptide is tRNA (cytosine(38)-C(5))-methyltransferase (Trdmt1) (Rattus norvegicus (Rat)).